The following is a 625-amino-acid chain: Interferon-induced GTP-binding protein Mx2 (625 aa).

The Dynamin-type G domain occupies 29 to 302; it reads DLALPAIAVI…LVFHIGRCLP (274 aa). The tract at residues 39–46 is G1 motif; sequence GDQSSGKS. 39–46 is a binding site for GTP; it reads GDQSSGKS. The segment at 64–66 is G2 motif; that stretch reads VTR. The G3 motif stretch occupies residues 140-143; the sequence is DLPG. GTP is bound by residues 140 to 144 and 209 to 212; these read DLPGI and TKPD. The G4 motif stretch occupies residues 209-212; that stretch reads TKPD. The interval 241–244 is G5 motif; that stretch reads RCRG. Residues 539 to 625 enclose the GED domain; it reads REELTCHLKS…TEALKYLAKF (87 aa).

It belongs to the TRAFAC class dynamin-like GTPase superfamily. Dynamin/Fzo/YdjA family.

It is found in the cytoplasm. The polypeptide is Interferon-induced GTP-binding protein Mx2 (mx2) (Ictalurus punctatus (Channel catfish)).